Here is a 106-residue protein sequence, read N- to C-terminus: Urease subunit beta (106 aa).

The protein belongs to the urease beta subunit family. Heterotrimer of UreA (gamma), UreB (beta) and UreC (alpha) subunits. Three heterotrimers associate to form the active enzyme.

Its subcellular location is the cytoplasm. The catalysed reaction is urea + 2 H2O + H(+) = hydrogencarbonate + 2 NH4(+). It functions in the pathway nitrogen metabolism; urea degradation; CO(2) and NH(3) from urea (urease route): step 1/1. The chain is Urease subunit beta from Synechococcus sp. (strain WH7805).